The primary structure comprises 294 residues: Cytidine deaminase (294 aa).

CMP/dCMP-type deaminase domains lie at 48–168 (DEDA…FGPK) and 186–294 (VSGD…VLLG). 89-91 (NME) is a substrate binding site. His102 serves as a coordination point for Zn(2+). Residue Glu104 is the Proton donor of the active site. Positions 129 and 132 each coordinate Zn(2+).

Belongs to the cytidine and deoxycytidylate deaminase family. Homodimer. Requires Zn(2+) as cofactor.

It carries out the reaction cytidine + H2O + H(+) = uridine + NH4(+). The catalysed reaction is 2'-deoxycytidine + H2O + H(+) = 2'-deoxyuridine + NH4(+). In terms of biological role, this enzyme scavenges exogenous and endogenous cytidine and 2'-deoxycytidine for UMP synthesis. The protein is Cytidine deaminase of Klebsiella pneumoniae (strain 342).